Reading from the N-terminus, the 21-residue chain is Large ribosomal subunit protein uL10 (21 aa).

Belongs to the universal ribosomal protein uL10 family. In terms of assembly, part of the ribosomal stalk of the 50S ribosomal subunit. The N-terminus interacts with L11 and the large rRNA to form the base of the stalk. The C-terminus forms an elongated spine to which L12 dimers bind in a sequential fashion forming a multimeric L10(L12)X complex.

Functionally, forms part of the ribosomal stalk, playing a central role in the interaction of the ribosome with GTP-bound translation factors. The polypeptide is Large ribosomal subunit protein uL10 (rplJ) (Proteus vulgaris).